A 334-amino-acid polypeptide reads, in one-letter code: F420-dependent glucose-6-phosphate dehydrogenase (334 aa).

Aspartate 38 lines the coenzyme F420-(gamma-Glu)n pocket. Histidine 39 functions as the Proton donor in the catalytic mechanism. Residues threonine 75 and 106 to 107 (TG) each bind coenzyme F420-(gamma-Glu)n. The active-site Proton acceptor is glutamate 108. Coenzyme F420-(gamma-Glu)n contacts are provided by residues asparagine 111, 175 to 176 (GG), and 178 to 179 (LV). Threonine 193, lysine 196, lysine 257, and arginine 281 together coordinate substrate.

It belongs to the F420-dependent glucose-6-phosphate dehydrogenase family. As to quaternary structure, homodimer.

It carries out the reaction oxidized coenzyme F420-(gamma-L-Glu)(n) + D-glucose 6-phosphate + H(+) = 6-phospho-D-glucono-1,5-lactone + reduced coenzyme F420-(gamma-L-Glu)(n). Its function is as follows. Catalyzes the coenzyme F420-dependent oxidation of glucose 6-phosphate (G6P) to 6-phosphogluconolactone. In Kribbella flavida (strain DSM 17836 / JCM 10339 / NBRC 14399), this protein is F420-dependent glucose-6-phosphate dehydrogenase.